The following is a 224-amino-acid chain: Homeobox protein Hox-B6 (224 aa).

Residues 127-132 (VYPWMQ) carry the Antp-type hexapeptide motif. The segment at residues 146–205 (GRRGRQTYTRYQTLELEKEFHYNRYLTRRRRIEIAHALCLTERQIKIWFQNRRMKWKKES) is a DNA-binding region (homeobox). S214 carries the phosphoserine modification.

Belongs to the Antp homeobox family.

It is found in the nucleus. In terms of biological role, sequence-specific transcription factor which is part of a developmental regulatory system that provides cells with specific positional identities on the anterior-posterior axis. This chain is Homeobox protein Hox-B6 (Hoxb6), found in Mus musculus (Mouse).